Reading from the N-terminus, the 260-residue chain is Acetylglutamate kinase (260 aa).

Residues 46 to 47 (GG), Arg-68, and Asn-160 contribute to the substrate site.

Belongs to the acetylglutamate kinase family. ArgB subfamily.

It localises to the cytoplasm. It carries out the reaction N-acetyl-L-glutamate + ATP = N-acetyl-L-glutamyl 5-phosphate + ADP. Its pathway is amino-acid biosynthesis; L-arginine biosynthesis; N(2)-acetyl-L-ornithine from L-glutamate: step 2/4. Catalyzes the ATP-dependent phosphorylation of N-acetyl-L-glutamate. This chain is Acetylglutamate kinase, found in Shewanella oneidensis (strain ATCC 700550 / JCM 31522 / CIP 106686 / LMG 19005 / NCIMB 14063 / MR-1).